Here is a 1187-residue protein sequence, read N- to C-terminus: Trafficking protein particle complex II-specific subunit 120 homolog (1187 aa).

The interval Gly1037–Ser1059 is disordered.

The protein belongs to the TRS120 family. In terms of assembly, part of the multisubunit TRAPP (transport protein particle) II complex composed of BET3, BET5, TRS20, TRS23, TRS31, TRS33, TRS65, TRS85, TRS120 and TRS130.

The protein localises to the golgi apparatus. Its subcellular location is the trans-Golgi network. It is found in the early endosome. Its function is as follows. Specific subunit of the TRAPP II complex, a highly conserved vesicle tethering complex that is required for the proper transport of proteins in post-Golgi trafficking pathways to the growing cell plate in mitotic active cells. In Oryza sativa subsp. japonica (Rice), this protein is Trafficking protein particle complex II-specific subunit 120 homolog.